The chain runs to 211 residues: Beta-crystallin B3 (211 aa).

M1 is modified (N-acetylmethionine). At A2 the chain carries N-acetylalanine; in Beta-crystallin B3, N-terminally processed. An N-terminal arm region spans residues 2–23 (AEQHGAPEQAAAGKSHGDLGGS). 2 consecutive Beta/gamma crystallin 'Greek key' domains span residues 24–63 (YKVI…QVES) and 64–108 (GPWL…RPLN). The connecting peptide stretch occupies residues 109 to 113 (IDSPH). 2 consecutive Beta/gamma crystallin 'Greek key' domains span residues 114-155 (HKLH…RAIN) and 156-198 (GTWV…RRIR). The segment at 200-211 (QKWHKRGRFPSS) is C-terminal arm.

It belongs to the beta/gamma-crystallin family. In terms of assembly, homo/heterodimer, or complexes of higher-order. The structure of beta-crystallin oligomers seems to be stabilized through interactions between the N-terminal arms.

Crystallins are the dominant structural components of the vertebrate eye lens. This Homo sapiens (Human) protein is Beta-crystallin B3 (CRYBB3).